A 1056-amino-acid polypeptide reads, in one-letter code: Pleckstrin homology domain-containing family M member 1 (1056 aa).

Positions 41 to 183 (TSEDGDANTM…LSFELSYKSA (143 aa)) constitute an RUN domain. 3 disordered regions span residues 215 to 245 (QRKESLDSISHSSGSEDIEVHHSGHKIRRNQ), 277 to 303 (GSKSPDHCEEPMSCDSDLGTANAEDSD), and 360 to 422 (PAQA…QAHD). A Phosphoserine modification is found at serine 219. Over residues 389 to 404 (PVESTSGQQPSSTVSE) the composition is skewed to polar residues. Phosphoserine is present on residues serine 432 and serine 435. The segment at 451–483 (SREQPLESASDHPIASYRGTPGSRPGLHRHFSQ) is disordered. Serine 490 is modified (phosphoserine). Residues 534 to 625 (GLMKLGTVER…WLDRVREALQ (92 aa)) form the PH 1 domain. Positions 632–638 (EDEWVNV) match the LIR motif. Residues 654 to 1056 (CLSPSDLLSE…RKYQEQNIFA (403 aa)) form an interaction with RAB7A region. Residues 683-777 (DAIKESLLYL…WRDLVRKVLA (95 aa)) enclose the PH 2 domain. The Phorbol-ester/DAG-type zinc-finger motif lies at 986-1040 (QHVYHCDLCTQRGFICQICQHHDIIFPFEFDTTVRCAECKTVFHQSCQAVVKKGC).

In terms of assembly, interacts (via N- and C-terminus) with RAB7A (GTP-bound form). Simultaneously interacts with RAB7A and ARL8B; bringing about clustering and fusion of late endosomes and lysosomes. Interacts (via RUN domain) with ARL8B (GTP-bound form); the interaction is required for PLEKHM1 localization to lysosomes and for ARL8B function in delivery and degradation of endocytic and autophagic cargo in lysosomes. PLEKHM1 and PLEKHM2 compete for interaction with ARL8B. Interacts with ARL8A; the interaction is weaker than with ARL8B. Interacts with VPS41, VPS11, VPS18, VPS33A and VPS39; indicative for an association with the HOPS complex; the interactions with, at least, VPS41, VPS11, VPS18 and VPS33A require ARL8B. Interacts with GABARAP, GABARAPL, GABARAPL2, MAP1LC3A, MAP1LC3B and MAP1LC3C. Interacts with PAFAH1B. Interacts (via N- and C-terminus) with NDEL1. Interacts (via C-terminus) with MAP3K7. Interacts (via N- and C-terminus) with FAM98A. Interacts (via C-terminus) with DEF8; this interaction is weak but increased in a RAB7A-dependent manner. In colon carcinoma and breast carcinoma cells, it interacts with sialyl-lex-positive protein. As to quaternary structure, (Microbial infection) Interacts with Salmonella typhimurium sifA. As to expression, expressed in placenta, liver, prostate, thymus, spleen, ovary, colon, colon carcinoma and peripheral blood lymphocytes (PBL). Weakly expressed in brain, lung, kidney, and testis. No expression in heart, skeletal muscle, pancreas and small intestine. Predominantly expressed in the breast carcinoma cell line MCF-7.

The protein localises to the autolysosome membrane. It is found in the endosome membrane. Its subcellular location is the late endosome membrane. The protein resides in the lysosome membrane. In terms of biological role, acts as a multivalent adapter protein that regulates Rab7-dependent and HOPS complex-dependent fusion events in the endolysosomal system and couples autophagic and the endocytic trafficking pathways. Acts as a dual effector of RAB7A and ARL8B that simultaneously binds these GTPases, bringing about clustering and fusion of late endosomes and lysosomes. Required for late stages of endolysosomal maturation, facilitating both endocytosis-mediated degradation of growth factor receptors and autophagosome clearance. Interaction with Arl8b is a crucial factor in the terminal maturation of autophagosomes and to mediate autophagosome-lysosome fusion. Positively regulates lysosome peripheral distribution and ruffled border formation in osteoclasts. May be involved in negative regulation of endocytic transport from early endosome to late endosome/lysosome implicating its association with Rab7. May have a role in sialyl-lex-mediated transduction of apoptotic signals. Involved in bone resorption. Its function is as follows. (Microbial infection) In case of infection contributes to Salmonella typhimurium pathogenesis by supporting the integrity of the Salmonella-containing vacuole (SCV) probably in concert with the HOPS complex and Rab7. This is Pleckstrin homology domain-containing family M member 1 from Homo sapiens (Human).